A 204-amino-acid chain; its full sequence is MALVIGLTGGIASGKTTVANLFKQQFKIDIVDADIVAREVVEPGTPGLNAIIQHFGQDITHDDNTLDRAKLREKIFSNPEEKAWLNALLHPIIREKMIEDLQQVTSDYALLVVPLLVENNLDSLCDRVLVVDVEPETQISRTVKRDNVSEEQAHAILASQASRQQRLDIADDVVKNNPNDPDLLLQITDLHEKYLAMCKKNLRK.

The region spanning 4–201 (VIGLTGGIAS…EKYLAMCKKN (198 aa)) is the DPCK domain. Residue 12 to 17 (ASGKTT) coordinates ATP.

The protein belongs to the CoaE family.

The protein localises to the cytoplasm. It carries out the reaction 3'-dephospho-CoA + ATP = ADP + CoA + H(+). The protein operates within cofactor biosynthesis; coenzyme A biosynthesis; CoA from (R)-pantothenate: step 5/5. Functionally, catalyzes the phosphorylation of the 3'-hydroxyl group of dephosphocoenzyme A to form coenzyme A. The chain is Dephospho-CoA kinase from Vibrio parahaemolyticus serotype O3:K6 (strain RIMD 2210633).